A 150-amino-acid polypeptide reads, in one-letter code: UPF0756 membrane protein YPN_1328 (150 aa).

The next 4 membrane-spanning stretches (helical) occupy residues 16 to 36, 51 to 71, 88 to 108, and 114 to 134; these read ALGI…LIAI, YGLT…IASG, ILAI…VSLM, and VVAG…GVPV.

It belongs to the UPF0756 family.

The protein localises to the cell membrane. The polypeptide is UPF0756 membrane protein YPN_1328 (Yersinia pestis bv. Antiqua (strain Nepal516)).